Consider the following 296-residue polypeptide: Thioredoxin-related transmembrane protein 2 (296 aa).

The first 48 residues, 1 to 48, serve as a signal peptide directing secretion; sequence MAVLAPLIALVYSVPRLSRWLAQPYYLLSALLSAAFLLVRKLPPLCHG. The Extracellular segment spans residues 49 to 102; sequence LPTQREDGNPCDFDWREVEILMFLSAIVMMKNRRSITVEQHIGNIFMFSKVANA. A helical membrane pass occupies residues 103–125; that stretch reads ILFFRLDIRMGLLYITLCIVFLM. In terms of domain architecture, Thioredoxin spans 114–270; it reads LLYITLCIVF…YQRAKKPSKA (157 aa). Residues 126–296 are Cytoplasmic-facing; the sequence is TCEPPLYMGP…VSDGENKKDK (171 aa). Residues serine 211, serine 243, and serine 288 each carry the phosphoserine modification. Residues 266–296 form a disordered region; it reads KPSKAGDSIPEEQPVASAPTTVSDGENKKDK. The short motif at 293–296 is the Di-lysine motif element; sequence KKDK.

Monomer. Homodimer; disulfide-linked. Occurs in both reduced and oxidized monomeric form. Oxidative conditions increase homodimerization. Interacts with CANX. Interacts with ATP2A2.

The protein resides in the endoplasmic reticulum membrane. The protein localises to the mitochondrion membrane. In terms of biological role, endoplasmic reticulum and mitochondria-associated protein that probably functions as a regulator of cellular redox state and thereby regulates protein post-translational modification, protein folding and mitochondrial activity. Indirectly regulates neuronal proliferation, migration, and organization in the developing brain. This chain is Thioredoxin-related transmembrane protein 2 (TMX2), found in Pongo abelii (Sumatran orangutan).